The chain runs to 103 residues: Large ribosomal subunit protein bL21 (103 aa).

It belongs to the bacterial ribosomal protein bL21 family. Part of the 50S ribosomal subunit. Contacts protein L20.

Functionally, this protein binds to 23S rRNA in the presence of protein L20. This Vibrio cholerae serotype O1 (strain ATCC 39541 / Classical Ogawa 395 / O395) protein is Large ribosomal subunit protein bL21.